The chain runs to 286 residues: Probable ketoamine kinase EAE_16955 (286 aa).

92 to 94 (EYL) serves as a coordination point for ATP. The Proton acceptor role is filled by Asp194.

The protein belongs to the fructosamine kinase family.

Ketoamine kinase that phosphorylates ketoamines on the third carbon of the sugar moiety to generate ketoamine 3-phosphate. This Klebsiella aerogenes (strain ATCC 13048 / DSM 30053 / CCUG 1429 / JCM 1235 / KCTC 2190 / NBRC 13534 / NCIMB 10102 / NCTC 10006 / CDC 819-56) (Enterobacter aerogenes) protein is Probable ketoamine kinase EAE_16955.